Here is a 204-residue protein sequence, read N- to C-terminus: 3,4-dihydroxy-2-butanone 4-phosphate synthase (204 aa).

Mg(2+) is bound at residue E27. D31 is a D-ribulose 5-phosphate binding site. C56 bears the S-glutathionyl cysteine mark. Residues T82 and 140 to 144 (RDGHT) each bind D-ribulose 5-phosphate. Residue H143 participates in Mg(2+) binding.

This sequence belongs to the DHBP synthase family. Homodimer. The cofactor is Mg(2+). It depends on Mn(2+) as a cofactor. S-glutathionylation is reversible and dependent on a glutaredoxin.

It catalyses the reaction D-ribulose 5-phosphate = (2S)-2-hydroxy-3-oxobutyl phosphate + formate + H(+). It participates in cofactor biosynthesis; riboflavin biosynthesis; 2-hydroxy-3-oxobutyl phosphate from D-ribulose 5-phosphate: step 1/1. Functionally, catalyzes the conversion of D-ribulose 5-phosphate to formate and 3,4-dihydroxy-2-butanone 4-phosphate. This is 3,4-dihydroxy-2-butanone 4-phosphate synthase from Schizosaccharomyces pombe (strain 972 / ATCC 24843) (Fission yeast).